The sequence spans 968 residues: RNA polymerase-associated protein RapA (968 aa).

A Helicase ATP-binding domain is found at 164–334; sequence EVGQRHAPRV…FARLRLLDPD (171 aa). 177-184 is an ATP binding site; that stretch reads DEVGLGKT. A DEAH box motif is present at residues 280–283; the sequence is DEAH. Residues 490–644 form the Helicase C-terminal domain; sequence RVEWLLNYLV…TCPTGRTIYD (155 aa).

The protein belongs to the SNF2/RAD54 helicase family. RapA subfamily. In terms of assembly, interacts with the RNAP. Has a higher affinity for the core RNAP than for the holoenzyme. Its ATPase activity is stimulated by binding to RNAP.

Its function is as follows. Transcription regulator that activates transcription by stimulating RNA polymerase (RNAP) recycling in case of stress conditions such as supercoiled DNA or high salt concentrations. Probably acts by releasing the RNAP, when it is trapped or immobilized on tightly supercoiled DNA. Does not activate transcription on linear DNA. Probably not involved in DNA repair. This chain is RNA polymerase-associated protein RapA, found in Yersinia pseudotuberculosis serotype O:1b (strain IP 31758).